A 71-amino-acid chain; its full sequence is Brevinin-1CG4 (71 aa).

Residues 1–22 (MFTLKKSLLLLFFLGTINLSLC) form the signal peptide. Positions 23–45 (EQERNADEEERRDDSDKRDVEVE) are cleaved as a propeptide — removed in mature form. Cys65 and Cys71 form a disulfide bridge.

It belongs to the frog skin active peptide (FSAP) family. Brevinin subfamily. Expressed by the skin glands.

Its subcellular location is the secreted. In terms of biological role, antimicrobial peptide active against a variety of Gram-positive and some Gram-negative bacterial strains. Has antifungal activity against C.albicans ATCC 10231 and a slime mold isolate. Has hemolytic activity against human erythrocytes. This is Brevinin-1CG4 from Amolops chunganensis (Chungan torrent frog).